A 659-amino-acid chain; its full sequence is Beta-galactosidase BgaA (659 aa).

Residue Arg-103 coordinates substrate. Residue Cys-107 participates in Zn(2+) binding. Asn-141 is a substrate binding site. The active-site Proton donor is the Glu-142. Residues Cys-148, Cys-150, and Cys-153 each contribute to the Zn(2+) site. Glu-298 functions as the Nucleophile in the catalytic mechanism. Trp-307 contributes to the substrate binding site.

The protein belongs to the glycosyl hydrolase 42 family. Dimer.

The enzyme catalyses Hydrolysis of terminal non-reducing beta-D-galactose residues in beta-D-galactosides.. Its activity is regulated as follows. Inhibited by Cu(2+), Hg(2+) and Zn(2+). No effect with Ca(2+), Mg(2+), Mn(2+) or excess EDTA (10 mM). In terms of biological role, involved in plant cell wall degradation in cooperation with cellulosome. Hydrolyzes both p-nitrophenyl-alpha-L-arabinopyranoside (pNPAp) and p-nitrophenyl-beta-D-galactopyranoside (pNPGp), with higher activity for pNPAp. Shows hydrolysis activity against p-nitrophenyl-beta-D-fucopyranoside (pNPFp), but not against p-nitrophenyl-alpha-L-arabinofuranoside (pNPAf), o-nitrophenyl-beta-D-galactopyranoside (oNPGp), p-nitrophenyl-beta-D-xylopyranoside (pNPXp), p-nitrophenyl-beta-D-glucopyranoside (pNPGLp), p-nitrophenyl-beta-D-cellobiopyranoside (pNPCp), p-nitrophenyl-beta-lactopyranoside (pNPLp) or p-nitrophenyl-alpha-galactopyranoside (pNPalphaGp). No detectable activity against arabinan or arabinoxylan, but activity against arabinogalactan can be detected. Increases degradation activity of alpha-L-arabinofuranosidase (ArfA) and endo-1,4-beta-xylanase (XynA) when corn fiber gum and corn stem powder are used as substrates. The sequence is that of Beta-galactosidase BgaA (bgaA) from Clostridium cellulovorans (strain ATCC 35296 / DSM 3052 / OCM 3 / 743B).